Reading from the N-terminus, the 259-residue chain is Imidazole glycerol phosphate synthase subunit HisF (259 aa).

Active-site residues include Asp11 and Asp130.

Belongs to the HisA/HisF family. Heterodimer of HisH and HisF.

The protein localises to the cytoplasm. The catalysed reaction is 5-[(5-phospho-1-deoxy-D-ribulos-1-ylimino)methylamino]-1-(5-phospho-beta-D-ribosyl)imidazole-4-carboxamide + L-glutamine = D-erythro-1-(imidazol-4-yl)glycerol 3-phosphate + 5-amino-1-(5-phospho-beta-D-ribosyl)imidazole-4-carboxamide + L-glutamate + H(+). Its pathway is amino-acid biosynthesis; L-histidine biosynthesis; L-histidine from 5-phospho-alpha-D-ribose 1-diphosphate: step 5/9. Its function is as follows. IGPS catalyzes the conversion of PRFAR and glutamine to IGP, AICAR and glutamate. The HisF subunit catalyzes the cyclization activity that produces IGP and AICAR from PRFAR using the ammonia provided by the HisH subunit. The polypeptide is Imidazole glycerol phosphate synthase subunit HisF (Polaromonas sp. (strain JS666 / ATCC BAA-500)).